The following is a 239-amino-acid chain: Serine protease SplC (239 aa).

Positions M1–A36 are cleaved as a signal peptide. Active-site charge relay system residues include H75, D113, and S193.

This sequence belongs to the peptidase S1B family.

It is found in the secreted. This is Serine protease SplC (splC) from Staphylococcus aureus (strain MW2).